Reading from the N-terminus, the 178-residue chain is Large ribosomal subunit protein uL10 (178 aa).

Belongs to the universal ribosomal protein uL10 family. In terms of assembly, part of the ribosomal stalk of the 50S ribosomal subunit. The N-terminus interacts with L11 and the large rRNA to form the base of the stalk. The C-terminus forms an elongated spine to which L12 dimers bind in a sequential fashion forming a multimeric L10(L12)X complex.

Its function is as follows. Forms part of the ribosomal stalk, playing a central role in the interaction of the ribosome with GTP-bound translation factors. The protein is Large ribosomal subunit protein uL10 of Gloeothece citriformis (strain PCC 7424) (Cyanothece sp. (strain PCC 7424)).